We begin with the raw amino-acid sequence, 283 residues long: Elongation factor Ts (283 aa).

The involved in Mg(2+) ion dislocation from EF-Tu stretch occupies residues 79 to 82 (TDFV).

It belongs to the EF-Ts family.

The protein localises to the cytoplasm. Functionally, associates with the EF-Tu.GDP complex and induces the exchange of GDP to GTP. It remains bound to the aminoacyl-tRNA.EF-Tu.GTP complex up to the GTP hydrolysis stage on the ribosome. This chain is Elongation factor Ts, found in Shewanella sp. (strain ANA-3).